Reading from the N-terminus, the 143-residue chain is Hemoglobin-1 (143 aa).

An N-acetylserine modification is found at Ser2. The 142-residue stretch at 2 to 143 folds into the Globin domain; sequence SLSAAQKDNV…ALMGMIRPNM (142 aa). Position 97 (His97) interacts with heme b.

It belongs to the globin family. Monomer.

It localises to the cytoplasm. Serves to transport hydrogen sulfide to autotrophic bacteria. The polypeptide is Hemoglobin-1 (Phacoides pectinatus (Thick lucine)).